The sequence spans 798 residues: RNA cytosine-C(5)-methyltransferase NSUN2 (798 aa).

Basic residues predominate over residues 1 to 13 (MGRRNRRNRQRHQ). Positions 1–30 (MGRRNRRNRQRHQRSTEQRSPAEEEQRRKA) are disordered. Basic and acidic residues predominate over residues 14–30 (RSTEQRSPAEEEQRRKA). S-adenosyl-L-methionine is bound by residues 186-192 (CAAPGSK), aspartate 217, aspartate 244, and aspartate 270. Cysteine 323 serves as the catalytic Nucleophile. Disordered regions lie at residues 476–499 (DEPA…SSKT) and 723–798 (KACD…ESVD). Residues 723–747 (KACDEEHIDEKMDIDGAKEESKELS) show a composition bias toward basic and acidic residues. Residues 751–762 (SGDDEDPKEEDV) show a composition bias toward acidic residues. The segment covering 763 to 772 (IDRGVLEHVA) has biased composition (basic and acidic residues).

It belongs to the class I-like SAM-binding methyltransferase superfamily. RsmB/NOP family. TRM4 subfamily.

It localises to the nucleus. The protein resides in the nucleolus. Its subcellular location is the cytoplasm. The protein localises to the mitochondrion. It is found in the cytoskeleton. It localises to the spindle. The protein resides in the secreted. Its subcellular location is the extracellular exosome. It catalyses the reaction cytidine(48) in tRNA + S-adenosyl-L-methionine = 5-methylcytidine(48) in tRNA + S-adenosyl-L-homocysteine + H(+). The catalysed reaction is cytidine(49) in tRNA + S-adenosyl-L-methionine = 5-methylcytidine(49) in tRNA + S-adenosyl-L-homocysteine + H(+). The enzyme catalyses cytidine(50) in tRNA + S-adenosyl-L-methionine = 5-methylcytidine(50) in tRNA + S-adenosyl-L-homocysteine + H(+). It carries out the reaction cytidine(34) in tRNA precursor + S-adenosyl-L-methionine = 5-methylcytidine(34) in tRNA precursor + S-adenosyl-L-homocysteine + H(+). It catalyses the reaction a cytidine in mRNA + S-adenosyl-L-methionine = a 5-methylcytidine in mRNA + S-adenosyl-L-homocysteine + H(+). Its function is as follows. RNA cytosine C(5)-methyltransferase that methylates cytosine to 5-methylcytosine (m5C) in various RNAs, such as tRNAs, mRNAs and some long non-coding RNAs (lncRNAs). Involved in various processes, such as epidermal stem cell differentiation, testis differentiation and maternal to zygotic transition during early development: acts by increasing protein synthesis; cytosine C(5)-methylation promoting tRNA stability and preventing mRNA decay. Methylates cytosine to 5-methylcytosine (m5C) at positions 34 and 48 of intron-containing tRNA(Leu)(CAA) precursors, and at positions 48, 49 and 50 of tRNA(Gly)(GCC) precursors. tRNA methylation is required generation of RNA fragments derived from tRNAs (tRFs). Also mediates C(5)-methylation of mitochondrial tRNAs. Catalyzes cytosine C(5)-methylation of mRNAs, leading to stabilize them and prevent mRNA decay. Cytosine C(5)-methylation of mRNAs also regulates mRNA export. Also mediates cytosine C(5)-methylation of non-coding RNAs, such as vault RNAs (vtRNAs), promoting their processing into regulatory small RNAs. Required for proper spindle assembly and chromosome segregation, independently of its methyltransferase activity. This is RNA cytosine-C(5)-methyltransferase NSUN2 from Xenopus tropicalis (Western clawed frog).